The chain runs to 478 residues: ATP synthase subunit beta (478 aa).

160-167 (GGAGVGKT) provides a ligand contact to ATP.

The protein belongs to the ATPase alpha/beta chains family. F-type ATPases have 2 components, CF(1) - the catalytic core - and CF(0) - the membrane proton channel. CF(1) has five subunits: alpha(3), beta(3), gamma(1), delta(1), epsilon(1). CF(0) has three main subunits: a(1), b(2) and c(9-12). The alpha and beta chains form an alternating ring which encloses part of the gamma chain. CF(1) is attached to CF(0) by a central stalk formed by the gamma and epsilon chains, while a peripheral stalk is formed by the delta and b chains.

It localises to the cell inner membrane. The catalysed reaction is ATP + H2O + 4 H(+)(in) = ADP + phosphate + 5 H(+)(out). Produces ATP from ADP in the presence of a proton gradient across the membrane. The catalytic sites are hosted primarily by the beta subunits. This is ATP synthase subunit beta from Orientia tsutsugamushi (strain Boryong) (Rickettsia tsutsugamushi).